The primary structure comprises 234 residues: Ribosomal RNA small subunit methyltransferase G (234 aa).

Residues Gly74, Phe79, 125 to 126, and Arg144 contribute to the S-adenosyl-L-methionine site; that span reads AE.

The protein belongs to the methyltransferase superfamily. RNA methyltransferase RsmG family.

It is found in the cytoplasm. Specifically methylates the N7 position of a guanine in 16S rRNA. In Roseiflexus sp. (strain RS-1), this protein is Ribosomal RNA small subunit methyltransferase G.